A 396-amino-acid polypeptide reads, in one-letter code: Putative 3-phosphoinositide-dependent protein kinase 2 (396 aa).

Residues 1–11 (MVRTQTESSTP) are compositionally biased toward polar residues. Positions 1 to 53 (MVRTQTESSTPPGIPGGSRQGPAMDGTAAEPRPGAGSLQHAQPPPQPRKKRPE) are disordered. The 261-residue stretch at 55–315 (FKFGKILGEG…YGPLKAHPFF (261 aa)) folds into the Protein kinase domain. ATP-binding positions include 65-67 (SFS) and Lys-84. Residues 86–130 (LEKRHIIKENKVPYVTRERDVMSRLDHPFFVKLYFTFQDDEKLYF) are PIF-pocket. ATP is bound by residues 133-135 (SYA) and Glu-139. The active-site Proton acceptor is Asp-178. Residues Glu-182 and Asp-196 each contribute to the ATP site.

The protein belongs to the protein kinase superfamily. AGC Ser/Thr protein kinase family. PDPK1 subfamily. In terms of processing, phosphorylated on tyrosine and serine/threonine.

Its subcellular location is the cytoplasm. It is found in the membrane. It catalyses the reaction L-seryl-[protein] + ATP = O-phospho-L-seryl-[protein] + ADP + H(+). It carries out the reaction L-threonyl-[protein] + ATP = O-phospho-L-threonyl-[protein] + ADP + H(+). Functionally, phosphorylates and activates not only PKB/AKT, but also PKA, PKC-zeta, RPS6KA1 and RPS6KB1. May play a general role in signaling processes and in development. The sequence is that of Putative 3-phosphoinositide-dependent protein kinase 2 from Homo sapiens (Human).